Here is a 305-residue protein sequence, read N- to C-terminus: UDP-3-O-acyl-N-acetylglucosamine deacetylase (305 aa).

Zn(2+) is bound by residues His-78, His-237, and Asp-241. The Proton donor role is filled by His-264.

This sequence belongs to the LpxC family. Zn(2+) is required as a cofactor.

It catalyses the reaction a UDP-3-O-[(3R)-3-hydroxyacyl]-N-acetyl-alpha-D-glucosamine + H2O = a UDP-3-O-[(3R)-3-hydroxyacyl]-alpha-D-glucosamine + acetate. It participates in glycolipid biosynthesis; lipid IV(A) biosynthesis; lipid IV(A) from (3R)-3-hydroxytetradecanoyl-[acyl-carrier-protein] and UDP-N-acetyl-alpha-D-glucosamine: step 2/6. In terms of biological role, catalyzes the hydrolysis of UDP-3-O-myristoyl-N-acetylglucosamine to form UDP-3-O-myristoylglucosamine and acetate, the committed step in lipid A biosynthesis. The protein is UDP-3-O-acyl-N-acetylglucosamine deacetylase of Burkholderia thailandensis (strain ATCC 700388 / DSM 13276 / CCUG 48851 / CIP 106301 / E264).